The following is a 414-amino-acid chain: Inositol-tetrakisphosphate 1-kinase (414 aa).

Lys-18 is a 1D-myo-inositol 1,3,4-trisphosphate binding site. ATP-binding residues include Arg-106 and Lys-157. The 209-residue stretch at 117 to 325 (EAYMEDDRIC…IATVLQGQST (209 aa)) folds into the ATP-grasp domain. 1D-myo-inositol 1,3,4-trisphosphate-binding residues include His-167 and Lys-199. ATP-binding positions include 188–199 (QNFINHNAVLYK), Ser-214, Ser-232, and Ser-236. Positions 281, 295, and 297 each coordinate Mg(2+). Asn-297 contributes to the 1D-myo-inositol 1,3,4-trisphosphate binding site. N6-acetyllysine; by EP300 and CREBBP occurs at positions 340 and 383. Phosphoserine is present on Ser-396. Lys-410 is modified (N6-acetyllysine; by EP300 and CREBBP).

The protein belongs to the ITPK1 family. In terms of assembly, monomer. Interacts with GPS1/COPS1. Mg(2+) serves as cofactor. Acetylation by EP300 and CREBBP destabilizes ITPK1, and down-regulates enzymatic activity. Deacetylated by SIRT1. Expressed in brain &gt; heart &gt; skeletal muscle = kidney = pancreas = liver = placenta &gt; lung. In brain, it is expressed in cerebellum, cerebral cortex, medulla, spinal cord, occipital lobe, frontal lobe, temporal lobe and putamen.

The catalysed reaction is 1D-myo-inositol 3,4,5,6-tetrakisphosphate + ATP = 1D-myo-inositol 1,3,4,5,6-pentakisphosphate + ADP + H(+). It carries out the reaction 1D-myo-inositol 1,3,4-trisphosphate + ATP = 1D-myo-inositol 1,3,4,5-tetrakisphosphate + ADP + H(+). The enzyme catalyses 1D-myo-inositol 1,3,4-trisphosphate + ATP = 1D-myo-inositol 1,3,4,6-tetrakisphosphate + ADP + H(+). It catalyses the reaction 1D-myo-inositol 3,4,6-trisphosphate + ATP = 1D-myo-inositol 1,3,4,6-tetrakisphosphate + ADP + H(+). The catalysed reaction is 1D-myo-inositol 1,3,4-trisphosphate + 1D-myo-inositol 1,3,4,5,6-pentakisphosphate = 1D-myo-inositol 3,4,5,6-tetrakisphosphate + 1D-myo-inositol 1,3,4,6-tetrakisphosphate. It carries out the reaction 1D-myo-inositol 1,3,4-trisphosphate + 1D-myo-inositol 1,3,4,5,6-pentakisphosphate = 1D-myo-inositol 3,4,5,6-tetrakisphosphate + 1D-myo-inositol 1,3,4,5-tetrakisphosphate. Kinase that can phosphorylate various inositol polyphosphate such as Ins(3,4,5,6)P4 or Ins(1,3,4)P3. Phosphorylates Ins(3,4,5,6)P4 at position 1 to form Ins(1,3,4,5,6)P5. This reaction is thought to have regulatory importance, since Ins(3,4,5,6)P4 is an inhibitor of plasma membrane Ca(2+)-activated Cl(-) channels, while Ins(1,3,4,5,6)P5 is not. Also phosphorylates Ins(1,3,4)P3 on O-5 and O-6 to form Ins(1,3,4,6)P4, an essential molecule in the hexakisphosphate (InsP6) pathway. Also acts as an inositol polyphosphate phosphatase that dephosphorylates Ins(1,3,4,5)P4 and Ins(1,3,4,6)P4 to Ins(1,3,4)P3, and Ins(1,3,4,5,6)P5 to Ins(3,4,5,6)P4. May also act as an isomerase that interconverts the inositol tetrakisphosphate isomers Ins(1,3,4,5)P4 and Ins(1,3,4,6)P4 in the presence of ADP and magnesium. Probably acts as the rate-limiting enzyme of the InsP6 pathway. Modifies TNF-alpha-induced apoptosis by interfering with the activation of TNFRSF1A-associated death domain. Plays an important role in MLKL-mediated necroptosis. Produces highly phosphorylated inositol phosphates such as inositolhexakisphosphate (InsP6) which bind to MLKL mediating the release of an N-terminal auto-inhibitory region leading to its activation. Essential for activated phospho-MLKL to oligomerize and localize to the cell membrane during necroptosis. This chain is Inositol-tetrakisphosphate 1-kinase, found in Homo sapiens (Human).